The following is a 198-amino-acid chain: Imidazoleglycerol-phosphate dehydratase (198 aa).

The protein belongs to the imidazoleglycerol-phosphate dehydratase family.

The protein resides in the cytoplasm. The enzyme catalyses D-erythro-1-(imidazol-4-yl)glycerol 3-phosphate = 3-(imidazol-4-yl)-2-oxopropyl phosphate + H2O. The protein operates within amino-acid biosynthesis; L-histidine biosynthesis; L-histidine from 5-phospho-alpha-D-ribose 1-diphosphate: step 6/9. The sequence is that of Imidazoleglycerol-phosphate dehydratase from Janthinobacterium sp. (strain Marseille) (Minibacterium massiliensis).